A 426-amino-acid polypeptide reads, in one-letter code: Probable serine/threonine-protein kinase PBL3 (426 aa).

Residues 1 to 42 (MGNCLDSSAKVDSSSHSPHANSASLSSRVSSKTSRSTVPSSL) form a disordered region. Gly-2 carries the N-myristoyl glycine lipid modification. A lipid anchor (S-palmitoyl cysteine) is attached at Cys-4. The segment covering 7-42 (SSAKVDSSSHSPHANSASLSSRVSSKTSRSTVPSSL) has biased composition (low complexity). Thr-72 bears the Phosphothreonine mark. One can recognise a Protein kinase domain in the interval 83–366 (FRPDSLLGEG…SEVLAKLDQL (284 aa)). ATP-binding positions include 89 to 97 (LGEGGFGYV) and Lys-121. Tyr-166 bears the Phosphotyrosine mark. The active-site Proton acceptor is Asp-216. The residue at position 250 (Ser-250) is a Phosphoserine. 2 positions are modified to phosphothreonine: Thr-251 and Thr-256. Tyr-264 is subject to Phosphotyrosine. A compositionally biased stretch (polar residues) spans 367–394 (ESTKPGTGVGNRQAQIDSPRGSNGSIVQ). The interval 367–426 (ESTKPGTGVGNRQAQIDSPRGSNGSIVQKSPRRYSYDRPLLHITPGASPLPTHNHSPRVR) is disordered.

Belongs to the protein kinase superfamily. Ser/Thr protein kinase family. As to quaternary structure, interacts with the Xanthomonas campestris effector XopAC/AvrAC. As to expression, strongly expressed in leaves, moderately in flowers, and barely in roots.

The protein localises to the cell membrane. The protein resides in the nucleus. It carries out the reaction L-seryl-[protein] + ATP = O-phospho-L-seryl-[protein] + ADP + H(+). The catalysed reaction is L-threonyl-[protein] + ATP = O-phospho-L-threonyl-[protein] + ADP + H(+). Functionally, may be involved in plant defense signaling. This is Probable serine/threonine-protein kinase PBL3 from Arabidopsis thaliana (Mouse-ear cress).